The following is a 243-amino-acid chain: tRNA (guanine-N(7)-)-methyltransferase (243 aa).

S-adenosyl-L-methionine-binding residues include E74, E99, D126, and D149. Residue D149 is part of the active site. Substrate contacts are provided by residues K153, D185, and 221–224; that span reads TKFE.

This sequence belongs to the class I-like SAM-binding methyltransferase superfamily. TrmB family.

It carries out the reaction guanosine(46) in tRNA + S-adenosyl-L-methionine = N(7)-methylguanosine(46) in tRNA + S-adenosyl-L-homocysteine. Its pathway is tRNA modification; N(7)-methylguanine-tRNA biosynthesis. In terms of biological role, catalyzes the formation of N(7)-methylguanine at position 46 (m7G46) in tRNA. This is tRNA (guanine-N(7)-)-methyltransferase from Psychromonas ingrahamii (strain DSM 17664 / CCUG 51855 / 37).